The sequence spans 114 residues: MSPRKTYILKLYVAGNTPNSMRALKTLHEILENEFKGVYALKVIDILKSPQLAEEDKILATPTLTKILPPPVRRIIGDLSDRERVLIGLDLLYEELSGNEFLSSIASPNSDEDN.

Belongs to the KaiB family. In terms of assembly, may undergo a major conformational rearrangment; in the free state forms homooligomers. When bound to KaiC switches to a monomeric thioredoxin-fold (KaiB(fs)). The active oscillator complex is probably KaiC(6):KaiB(6).

Component of the KaiBC clock protein complex, which constitutes the main circadian regulator in cyanobacteria; it may modify the ATPase activity of KaiC. Its function is as follows. May be a metamorphic protein which reversibly switches between an inactive tetrameric fold and a rare, thioredoxin-like monomeric fold (KaiB(fs)). KaiB(fs) binds phospho-KaiC, and perhaps clock output effectors. The sequence is that of Circadian clock oscillator protein KaiB from Prochlorococcus marinus (strain MIT 9211).